Consider the following 307-residue polypeptide: N-acetylmuramic acid 6-phosphate etherase (307 aa).

Positions 59–222 (TADRLRQGGR…STGVMVKLGK (164 aa)) constitute an SIS domain. Catalysis depends on Glu87, which acts as the Proton donor. Residue Glu118 is part of the active site.

Belongs to the GCKR-like family. MurNAc-6-P etherase subfamily. Homodimer.

It catalyses the reaction N-acetyl-D-muramate 6-phosphate + H2O = N-acetyl-D-glucosamine 6-phosphate + (R)-lactate. Its pathway is amino-sugar metabolism; N-acetylmuramate degradation. Specifically catalyzes the cleavage of the D-lactyl ether substituent of MurNAc 6-phosphate, producing GlcNAc 6-phosphate and D-lactate. The sequence is that of N-acetylmuramic acid 6-phosphate etherase from Trichormus variabilis (strain ATCC 29413 / PCC 7937) (Anabaena variabilis).